A 227-amino-acid polypeptide reads, in one-letter code: Small ribosomal subunit protein uS3 (227 aa).

The KH type-2 domain occupies 39-107; it reads VRQLLQKRLK…PVHITIEEVR (69 aa).

This sequence belongs to the universal ribosomal protein uS3 family. Part of the 30S ribosomal subunit. Forms a tight complex with proteins S10 and S14.

Functionally, binds the lower part of the 30S subunit head. Binds mRNA in the 70S ribosome, positioning it for translation. This Coxiella burnetii (strain CbuK_Q154) (Coxiella burnetii (strain Q154)) protein is Small ribosomal subunit protein uS3.